The chain runs to 122 residues: Large ribosomal subunit protein uL14c (122 aa).

This sequence belongs to the universal ribosomal protein uL14 family. Part of the 50S ribosomal subunit.

It localises to the plastid. The protein resides in the chloroplast. In terms of biological role, binds to 23S rRNA. The chain is Large ribosomal subunit protein uL14c from Capsella bursa-pastoris (Shepherd's purse).